A 163-amino-acid polypeptide reads, in one-letter code: Augmin complex subunit wac (163 aa).

Residues 86–115 (ELQRILSSIEEATRDVVMLERFNAAAEERL) adopt a coiled-coil conformation.

Component of the augmin complex composed of dgt2, dgt3, dgt4, dgt5, dgt6, msd1, msd5 and wac. The complex interacts directly or indirectly with microtubules and is required for centrosome-independent generation of spindle microtubules. wac interacts directly (via coiled coil) with dgt2. In terms of tissue distribution, in adult females, detected only in the abdomen with no expression in the head or thorax (at protein level).

The protein localises to the cytoplasm. Its subcellular location is the cytoskeleton. It is found in the spindle. The protein resides in the spindle pole. Its function is as follows. As part of the augmin complex, plays a role in centrosome-independent generation of spindle microtubules. The complex is required for mitotic spindle assembly through its involvement in localizing gamma-tubulin to spindle microtubules. wac is dispensable for somatic mitosis and for assembly of spindle microtubules in oocytes during female meiosis but is required during female meiosis for chromosome alignment and segregation. It is required for microtubule assembly near spindle poles in oocytes. It is also required for acentrosomal microtubule nucleation and meiotic spindle formation during male meiosis. wac binds to microtubules in vitro. This chain is Augmin complex subunit wac, found in Drosophila melanogaster (Fruit fly).